The chain runs to 327 residues: Cobalamin biosynthesis protein CobD (327 aa).

4 consecutive transmembrane segments (helical) span residues 60–80, 82–102, 159–179, and 304–324; these read GMWL…VLEL, LPFA…VLLA, DGIV…LFAY, and LFWS…LIGL.

Belongs to the CobD/CbiB family.

The protein localises to the cell membrane. It participates in cofactor biosynthesis; adenosylcobalamin biosynthesis. Its function is as follows. Converts cobyric acid to cobinamide by the addition of aminopropanol on the F carboxylic group. This Brucella anthropi (strain ATCC 49188 / DSM 6882 / CCUG 24695 / JCM 21032 / LMG 3331 / NBRC 15819 / NCTC 12168 / Alc 37) (Ochrobactrum anthropi) protein is Cobalamin biosynthesis protein CobD.